The following is a 155-amino-acid chain: 6,7-dimethyl-8-ribityllumazine synthase (155 aa).

5-amino-6-(D-ribitylamino)uracil-binding positions include Trp22, 56 to 58 (SFE), and 80 to 82 (AVI). 85–86 (AT) is a binding site for (2S)-2-hydroxy-3-oxobutyl phosphate. His88 functions as the Proton donor in the catalytic mechanism. Residue Phe113 participates in 5-amino-6-(D-ribitylamino)uracil binding. (2S)-2-hydroxy-3-oxobutyl phosphate is bound at residue Arg127.

Belongs to the DMRL synthase family.

It carries out the reaction (2S)-2-hydroxy-3-oxobutyl phosphate + 5-amino-6-(D-ribitylamino)uracil = 6,7-dimethyl-8-(1-D-ribityl)lumazine + phosphate + 2 H2O + H(+). Its pathway is cofactor biosynthesis; riboflavin biosynthesis; riboflavin from 2-hydroxy-3-oxobutyl phosphate and 5-amino-6-(D-ribitylamino)uracil: step 1/2. In terms of biological role, catalyzes the formation of 6,7-dimethyl-8-ribityllumazine by condensation of 5-amino-6-(D-ribitylamino)uracil with 3,4-dihydroxy-2-butanone 4-phosphate. This is the penultimate step in the biosynthesis of riboflavin. This chain is 6,7-dimethyl-8-ribityllumazine synthase, found in Chloroflexus aurantiacus (strain ATCC 29364 / DSM 637 / Y-400-fl).